Reading from the N-terminus, the 61-residue chain is Hepcidin (61 aa).

The interval 1–24 (LQVLTEEVGSIDSPVGEHQQPGGE) is disordered. Residues 1-34 (LQVLTEEVGSIDSPVGEHQQPGGESMRLPEHFRF) constitute a propeptide that is removed on maturation. 4 disulfides stabilise this stretch: Cys43-Cys59, Cys46-Cys49, Cys47-Xaa55, and Cys50-Cys58.

This sequence belongs to the hepcidin family.

It localises to the secreted. Functionally, seems to act as a signaling molecule involved in the maintenance of iron homeostasis. Seems to be required in conjunction with HFE to regulate both intestinal iron absorption and iron storage in macrophages. May also have antimicrobial activity. This is Hepcidin (hamp) from Oncorhynchus mykiss (Rainbow trout).